Here is a 509-residue protein sequence, read N- to C-terminus: ATP synthase subunit alpha (509 aa).

169–176 (GDRQTGKT) lines the ATP pocket.

It belongs to the ATPase alpha/beta chains family. F-type ATPases have 2 components, CF(1) - the catalytic core - and CF(0) - the membrane proton channel. CF(1) has five subunits: alpha(3), beta(3), gamma(1), delta(1), epsilon(1). CF(0) has three main subunits: a(1), b(2) and c(9-12). The alpha and beta chains form an alternating ring which encloses part of the gamma chain. CF(1) is attached to CF(0) by a central stalk formed by the gamma and epsilon chains, while a peripheral stalk is formed by the delta and b chains.

The protein resides in the cell inner membrane. It carries out the reaction ATP + H2O + 4 H(+)(in) = ADP + phosphate + 5 H(+)(out). Functionally, produces ATP from ADP in the presence of a proton gradient across the membrane. The alpha chain is a regulatory subunit. The protein is ATP synthase subunit alpha of Paramagnetospirillum magneticum (strain ATCC 700264 / AMB-1) (Magnetospirillum magneticum).